A 304-amino-acid chain; its full sequence is Nucleotide-binding protein KRH_12070 (304 aa).

27–34 (GMSGAGRS) is a binding site for ATP. A GTP-binding site is contributed by 78–81 (DVRG).

This sequence belongs to the RapZ-like family.

In terms of biological role, displays ATPase and GTPase activities. This chain is Nucleotide-binding protein KRH_12070, found in Kocuria rhizophila (strain ATCC 9341 / DSM 348 / NBRC 103217 / DC2201).